The primary structure comprises 389 residues: Gustatory receptor for bitter taste 22e (389 aa).

Residues 1–14 (MFRPSGSGYRQKWT) are Cytoplasmic-facing. Residues 15 to 35 (GLTLKGALYGSWILGVFPFAY) traverse the membrane as a helical segment. Over 36 to 46 (DSWTRTLRRSK) the chain is Extracellular. The chain crosses the membrane as a helical span at residues 47–67 (WLIAYGFVLNAAFILLVVTND). Residues 68–142 (TESETPLRME…SLEECISFDR (75 aa)) lie on the Cytoplasmic side of the membrane. The chain crosses the membrane as a helical span at residues 143–163 (FVLYKGFSVVLELVSMLVLEL). Residues 164–170 (GMSPNYS) are Extracellular-facing. N-linked (GlcNAc...) asparagine glycosylation occurs at Asn-168. A helical transmembrane segment spans residues 171–191 (AQFFIGLGSLCLMLLAVLLGA). At 192 to 254 (SHFHLAVVFV…QRLASIYDYQ (63 aa)) the chain is on the cytoplasmic side. Residues 255 to 275 (MVMVMVSFLIANVLGIYFFII) form a helical membrane-spanning segment. The Extracellular segment spans residues 276 to 287 (YSISLNKSLDFK). Residue Asn-281 is glycosylated (N-linked (GlcNAc...) asparagine). Residues 288–308 (ILVFVQALVINMLDFWLNVEI) traverse the membrane as a helical segment. The Cytoplasmic segment spans residues 309–366 (CELAERTGRQTSTILKLFNDIENIDEKLERSITDFALFCSHRRLRFHHCGLFYVNYEM). The helical transmembrane segment at 367 to 387 (GFRMAITSFLYLLFLIQFDYW) threads the bilayer. Residues 388–389 (NL) are Extracellular-facing.

Belongs to the insect chemoreceptor superfamily. Gustatory receptor (GR) family. Gr22e subfamily. As to expression, taste bristles on the labial palp, labral and cibarial sense organs, chemosensory bristles on the leg and anterior wing margin. In larvae, is expressed in neurons of the terminal external chemosensory organ and in the dorsal pharyngeal sense organ. Neurons expressing Gr22e also express Gr66a and correspond to taste neurons that mediate sensitivity to bitter compounds.

The protein localises to the cell membrane. Gustatory receptor which mediates acceptance or avoidance behavior, depending on its substrates. Seems to be involved in the sensing of bitter taste since it is expressed in neurons that mediate sensitivity to bitter compounds which are also avoidance-type taste neurons. In Drosophila melanogaster (Fruit fly), this protein is Gustatory receptor for bitter taste 22e (Gr22e).